The following is an 80-amino-acid chain: UPF0291 protein EF_1580 (80 aa).

The interval 60-80 (TDVTPEKLKKIQREKGLHNRK) is disordered. The span at 63–80 (TPEKLKKIQREKGLHNRK) shows a compositional bias: basic and acidic residues.

The protein belongs to the UPF0291 family.

It localises to the cytoplasm. The protein is UPF0291 protein EF_1580 of Enterococcus faecalis (strain ATCC 700802 / V583).